A 143-amino-acid chain; its full sequence is MFSIKSIQLCRYFSRKSGVLRYWHSAPYLTHSKLLEDKLIRPVDRSKETEKLLRSRLVYQSRKRGILETDLILSGFAKEYLSKYNVELLKEYDNLLNEADWDILYWCTGERQAPEHWLNSRVLRDLKEYLSSKNGVVRFMPEL.

This sequence belongs to the SDHAF2 family. Interacts with the flavoprotein subunit within the SDH catalytic dimer.

It is found in the mitochondrion matrix. Plays an essential role in the assembly of succinate dehydrogenase (SDH), an enzyme complex (also referred to as respiratory complex II) that is a component of both the tricarboxylic acid (TCA) cycle and the mitochondrial electron transport chain, and which couples the oxidation of succinate to fumarate with the reduction of ubiquinone (coenzyme Q) to ubiquinol. Required for flavinylation (covalent attachment of FAD) of the flavoprotein subunit of the SDH catalytic dimer. This Schizosaccharomyces japonicus (strain yFS275 / FY16936) (Fission yeast) protein is Succinate dehydrogenase assembly factor 2, mitochondrial.